Consider the following 44-residue polypeptide: Mu-conotoxin-like Cal 12.1.2h (44 aa).

Cystine bridges form between cysteine 3–cysteine 16, cysteine 11–cysteine 28, cysteine 18–cysteine 33, and cysteine 27–cysteine 38. 6'-bromotryptophan is present on tryptophan 17. Proline 23 is subject to 4-hydroxyproline. Tryptophan 36 and tryptophan 37 each carry 6'-bromotryptophan. The residue at position 39 (proline 39) is a 4-hydroxyproline. Tryptophan 43 carries the 6'-bromotryptophan modification.

In terms of tissue distribution, expressed by the venom duct.

It localises to the secreted. Its function is as follows. Mu-conotoxins block voltage-gated sodium channels. This toxin reversibly blocks voltage-gated sodium channel in cephalopods, with no alteration in the voltage dependence of sodium conductance or on the kinetics of inactivation. The protein is Mu-conotoxin-like Cal 12.1.2h of Californiconus californicus (California cone).